Reading from the N-terminus, the 88-residue chain is MMLSKVVLLALLLSLSCLWVAKASEQRTRVSEVVREAEIHDGGQCTDDDICNKNCLDCIARQCIFQQCVCSKRFFPPNSQPNLRVKKH.

Positions 1-23 (MMLSKVVLLALLLSLSCLWVAKA) are cleaved as a signal peptide. Cystine bridges form between C45/C63, C51/C68, and C55/C70.

This sequence belongs to the DEFL family.

The protein resides in the secreted. The chain is Defensin-like protein 267 from Arabidopsis thaliana (Mouse-ear cress).